A 400-amino-acid chain; its full sequence is CCA-adding enzyme (400 aa).

Positions 8 and 11 each coordinate ATP. Residues Gly-8 and Arg-11 each coordinate CTP. Mg(2+) is bound by residues Asp-21 and Asp-23. Residues Arg-91, Arg-137, and Arg-140 each coordinate ATP. Residues Arg-91, Arg-137, and Arg-140 each contribute to the CTP site. The 106-residue stretch at 217–322 (NFQYAMTALK…IDLFNKWDVW (106 aa)) folds into the HD domain.

Belongs to the tRNA nucleotidyltransferase/poly(A) polymerase family. Bacterial CCA-adding enzyme type 2 subfamily. The cofactor is Mg(2+).

The enzyme catalyses a tRNA precursor + 2 CTP + ATP = a tRNA with a 3' CCA end + 3 diphosphate. The catalysed reaction is a tRNA with a 3' CCA end + 2 CTP + ATP = a tRNA with a 3' CCACCA end + 3 diphosphate. Its function is as follows. Catalyzes the addition and repair of the essential 3'-terminal CCA sequence in tRNAs without using a nucleic acid template. Adds these three nucleotides in the order of C, C, and A to the tRNA nucleotide-73, using CTP and ATP as substrates and producing inorganic pyrophosphate. tRNA 3'-terminal CCA addition is required both for tRNA processing and repair. Also involved in tRNA surveillance by mediating tandem CCA addition to generate a CCACCA at the 3' terminus of unstable tRNAs. While stable tRNAs receive only 3'-terminal CCA, unstable tRNAs are marked with CCACCA and rapidly degraded. This Actinobacillus succinogenes (strain ATCC 55618 / DSM 22257 / CCUG 43843 / 130Z) protein is CCA-adding enzyme.